A 431-amino-acid chain; its full sequence is POU domain, class 2, transcription factor 3 (431 aa).

Disordered stretches follow at residues 1 to 39, 130 to 180, and 248 to 267; these read MVNL…RNGL, LLPQ…EPTD, and DAES…YPTL. The POU-specific domain maps to 176-250; the sequence is DEPTDLEELE…LLEKWLNDAE (75 aa). The span at 251–267 shows a compositional bias: low complexity; the sequence is SSPSDPSASTPSSYPTL. The segment at residues 274 to 333 is a DNA-binding region (homeobox); it reads KRKKRTSIETNIRLTLEKRFQDNPKPSSEEISMIAEQLSMEKEVVRVWFCNRRQKEKRIN. Low complexity-rich tracts occupy residues 352–364, 374–390, and 398–419; these read PSGS…VPPV, SSCS…PGSG, and ASQN…NSSG. The interval 352 to 419 is disordered; sequence PSGSLGPLSV…SSSSSFNSSG (68 aa).

This sequence belongs to the POU transcription factor family. Class-2 subfamily. As to quaternary structure, interacts (via the POU domain) with POU2AF1 and POU2AF2 in a DNA-dependent manner; this interaction recruits POU2AF2 to chromatin and increases POU2F3 transactivation activity. In terms of tissue distribution, skin, thymus, stomach and testis.

It localises to the nucleus. Transcription factor that binds to the octamer motif (5'-ATTTGCAT-3'). Regulates cell type-specific differentiation pathways. Involved in the regulation of keratinocytes differentiation. The POU2F3-POU2AF2/POU2AF3 complex drives the expression of tuft-cell-specific genes, a rare chemosensory cells that coordinate immune and neural functions within mucosal epithelial tissues. The sequence is that of POU domain, class 2, transcription factor 3 (Pou2f3) from Mus musculus (Mouse).